Consider the following 285-residue polypeptide: Putative lipoprotein SCO4650 (285 aa).

The N-terminal stretch at 1–20 is a signal peptide; the sequence is MTGTTARRTVVSVAVSAALA. Cys-21 is lipidated: N-palmitoyl cysteine. Cys-21 carries S-diacylglycerol cysteine lipidation. The tract at residues 27–63 is disordered; that stretch reads GPGGSDDAGHSTGPTGSARPSASAPASSRAPALTGPS. Low complexity predominate over residues 43-58; sequence SARPSASAPASSRAPA.

The protein resides in the cell membrane. This Streptomyces coelicolor (strain ATCC BAA-471 / A3(2) / M145) protein is Putative lipoprotein SCO4650.